The primary structure comprises 341 residues: Ferrochelatase (341 aa).

Residues histidine 189 and glutamate 293 each contribute to the Fe cation site.

It belongs to the ferrochelatase family.

The protein resides in the cytoplasm. The catalysed reaction is heme b + 2 H(+) = protoporphyrin IX + Fe(2+). The protein operates within porphyrin-containing compound metabolism; protoheme biosynthesis; protoheme from protoporphyrin-IX: step 1/1. Catalyzes the ferrous insertion into protoporphyrin IX. The polypeptide is Ferrochelatase (Stutzerimonas stutzeri (strain A1501) (Pseudomonas stutzeri)).